The primary structure comprises 171 residues: uncharacterized protein (171 aa).

Residues 21–43 (GVAASLLILLAVYTIFQSTVVIA) form a helical membrane-spanning segment.

Its subcellular location is the membrane. This is an uncharacterized protein from Archaeoglobus fulgidus (strain ATCC 49558 / DSM 4304 / JCM 9628 / NBRC 100126 / VC-16).